A 335-amino-acid polypeptide reads, in one-letter code: Homeobox protein DBX1 (335 aa).

2 disordered regions span residues 58-102 (IPAA…LSPA) and 240-335 (KERE…ITVS). A compositionally biased stretch (low complexity) spans 83-95 (GSPGSGSRRGSSP). The segment at residues 181-240 (GMLRRAVFSDVQRKALEKTFQKQKYISKPDRKKLASKLGLKDSQVKIWFQNRRMKWRNSK) is a DNA-binding region (homeobox). Residues 299–317 (GPLPASPAHSSSPGKPSDF) show a composition bias toward low complexity. Residues 318–335 (SDSDEDEEGEEDEEITVS) show a composition bias toward acidic residues.

This sequence belongs to the H2.0 homeobox family.

It localises to the nucleus. In terms of biological role, could have a role in patterning the central nervous system during embryogenesis. Has a key role in regulating the distinct phenotypic features that distinguish two major classes of ventral interneurons, V0 and V1 neurons. Regulates the transcription factor profile, neurotransmitter phenotype, intraspinal migratory path and axonal trajectory of V0 neurons, features that differentiate them from an adjacent set of V1 neurons. This is Homeobox protein DBX1 (Dbx1) from Mus musculus (Mouse).